The sequence spans 1006 residues: MKLLSVCAIALLAAQAAGASIKHMLNGFTLMEHSDPAKRELLQKYVTWDEKSLFVNGERIMIFSGEVHPFRLPVPSLWLDVFQKIKALGFNCVSFYVDWALLEGKPGEYRAEGNFALEPFFDVAKQAGIYLLARPGPYINAEASGGGFPGWLQRVNGTLRTSDPAYLKATDNYIAHVAATIAKGQITNGGPVILYQPENEYSGACCDATFPDGDYMQYVIDQARNAGIVVPLINNDAWTGGHNAPGTGKGEVDIYGHDSYPLGFDCGHPSVWPKGNLPTTFRTDHLKQSPTTPYSLIEFQAGSFDPWGGPGFAACAALVNHEFERVFYKNDLSFGAAILNLYMTFGGTNWGNLGHPGGYTSYDYGSPLTESRNVTREKYSELKLIGNFVKASPSYLLATPGNLTTSGYADTADLTVTPLLGNGTGSYFVVRHTDYTSQASTPYKLSLPTSAGRLTVPQLGGTLTLNGRDSKIHVVDYNVAGTNIIYSTAEVFTWKNFGDSKVLILYGGPGEHHELAVSLKSDVQVVEGSNSEFKSKKVGDVVVVAWDVSPSRRIVQIGDLKIFLLDRNSVYNYWVPQLDKDDSSTGYSSEKTTASSIIVKAGYLVRTAYTKGSGLYLTADFNATTPVEVIGAPSNVRNLYINGEKTQFKTDKNGIWSTEVKYSAPKIKLPSMKDLDWKYLDTLQEVQSTYDDSAWPAADLDTTPNTLRPLTTPKSLYSSDYGFHTGYLIYRGHFVADGSETTFDVRTQGGSAFGSSVWLNESFLGSWTGLNANADYNSTYKLPQVEQGKNYVLTILIDTMGLNENWVVGTDEMKNPRGILSYKLSGRDASAITWKLTGNLGGEDYQDKIRGPLNEGGLYAERQGFHQPQPPSQKWKSASPLDGLSKPGIGFYTAQFDLDIPSGWDVPLYFNFGNSTKSAYRVQLYVNGYQYGKFVSNIGPQTSFPVPQGILNYQGTNWVALTLWALESDGAKLDDFELVNTTPVMTALSKIRPSKQPNYRQRKGAY.

Positions 1–18 (MKLLSVCAIALLAAQAAG) are cleaved as a signal peptide. Positions 96, 140, 141, and 142 each coordinate substrate. Residue Asn156 is glycosylated (N-linked (GlcNAc...) asparagine). Asn199 serves as a coordination point for substrate. Catalysis depends on Glu200, which acts as the Proton donor. Cysteines 205 and 206 form a disulfide. Residue Tyr260 coordinates substrate. Cys266 and Cys315 are joined by a disulfide. Glu298 serves as the catalytic Nucleophile. Substrate is bound at residue Tyr364. N-linked (GlcNAc...) asparagine glycans are attached at residues Asn373, Asn402, Asn422, Asn622, Asn760, Asn777, and Asn914.

This sequence belongs to the glycosyl hydrolase 35 family.

It is found in the secreted. It carries out the reaction Hydrolysis of terminal non-reducing beta-D-galactose residues in beta-D-galactosides.. Its function is as follows. Cleaves beta-linked terminal galactosyl residues from gangliosides, glycoproteins, and glycosaminoglycans. In Aspergillus fumigatus (strain ATCC MYA-4609 / CBS 101355 / FGSC A1100 / Af293) (Neosartorya fumigata), this protein is Probable beta-galactosidase A (lacA).